Consider the following 306-residue polypeptide: Probable rRNA-processing protein EBP2 (306 aa).

M1 bears the N-acetylmethionine mark. Disordered regions lie at residues M1 to D20, G75 to Q103, and I150 to Q169. T3 is modified (phosphothreonine). Residues S7, S9, S11, and S13 each carry the phosphoserine modification. Polar residues predominate over residues S81–Q90. Residues D91–Q103 show a composition bias toward basic and acidic residues. K93 participates in a covalent cross-link: Glycyl lysine isopeptide (Lys-Gly) (interchain with G-Cter in SUMO2). Residues D135–R171 adopt a coiled-coil conformation. Glycyl lysine isopeptide (Lys-Gly) (interchain with G-Cter in SUMO2) cross-links involve residues K179 and K218. Residues L213–A224 are compositionally biased toward basic and acidic residues. The tract at residues L213–R306 is disordered. 2 positions are modified to phosphoserine: S264 and S270. The segment covering K274–R306 has biased composition (basic residues).

This sequence belongs to the EBP2 family. Interacts with WDR46.

The protein resides in the nucleus. It is found in the nucleolus. Required for the processing of the 27S pre-rRNA. The protein is Probable rRNA-processing protein EBP2 (Ebna1bp2) of Mus musculus (Mouse).